Here is a 278-residue protein sequence, read N- to C-terminus: Indole-3-glycerol phosphate synthase (278 aa).

This sequence belongs to the TrpC family.

The catalysed reaction is 1-(2-carboxyphenylamino)-1-deoxy-D-ribulose 5-phosphate + H(+) = (1S,2R)-1-C-(indol-3-yl)glycerol 3-phosphate + CO2 + H2O. It functions in the pathway amino-acid biosynthesis; L-tryptophan biosynthesis; L-tryptophan from chorismate: step 4/5. The polypeptide is Indole-3-glycerol phosphate synthase (Pseudomonas paraeruginosa (strain DSM 24068 / PA7) (Pseudomonas aeruginosa (strain PA7))).